Consider the following 477-residue polypeptide: Aspartyl/glutamyl-tRNA(Asn/Gln) amidotransferase subunit B (477 aa).

It belongs to the GatB/GatE family. GatB subfamily. As to quaternary structure, heterotrimer of A, B and C subunits.

It catalyses the reaction L-glutamyl-tRNA(Gln) + L-glutamine + ATP + H2O = L-glutaminyl-tRNA(Gln) + L-glutamate + ADP + phosphate + H(+). The enzyme catalyses L-aspartyl-tRNA(Asn) + L-glutamine + ATP + H2O = L-asparaginyl-tRNA(Asn) + L-glutamate + ADP + phosphate + 2 H(+). Allows the formation of correctly charged Asn-tRNA(Asn) or Gln-tRNA(Gln) through the transamidation of misacylated Asp-tRNA(Asn) or Glu-tRNA(Gln) in organisms which lack either or both of asparaginyl-tRNA or glutaminyl-tRNA synthetases. The reaction takes place in the presence of glutamine and ATP through an activated phospho-Asp-tRNA(Asn) or phospho-Glu-tRNA(Gln). The chain is Aspartyl/glutamyl-tRNA(Asn/Gln) amidotransferase subunit B from Ligilactobacillus salivarius (strain UCC118) (Lactobacillus salivarius).